We begin with the raw amino-acid sequence, 32 residues long: 24 kDa flagellin (32 aa).

This sequence belongs to the archaeal flagellin family. In terms of processing, glycosylated.

The protein localises to the archaeal flagellum. In terms of biological role, flagellin is the subunit protein which polymerizes to form the filaments of archaeal flagella. The chain is 24 kDa flagellin from Methanospirillum hungatei.